The primary structure comprises 163 residues: Small heat shock protein C1 (163 aa).

A sHSP domain is found at Met-55 to Asn-163.

This sequence belongs to the small heat shock protein (HSP20) family.

This chain is Small heat shock protein C1 (hspC1), found in Rickettsia typhi (strain ATCC VR-144 / Wilmington).